A 459-amino-acid chain; its full sequence is Cysteine--tRNA ligase (459 aa).

Cys-31 contributes to the Zn(2+) binding site. Positions 33 to 43 (PTVYDNPHIGN) match the 'HIGH' region motif. The Zn(2+) site is built by Cys-216, His-241, and Glu-245. Residues 274–278 (KMSKS) carry the 'KMSKS' region motif. Lys-277 provides a ligand contact to ATP.

It belongs to the class-I aminoacyl-tRNA synthetase family. In terms of assembly, monomer. Zn(2+) serves as cofactor.

Its subcellular location is the cytoplasm. The catalysed reaction is tRNA(Cys) + L-cysteine + ATP = L-cysteinyl-tRNA(Cys) + AMP + diphosphate. The sequence is that of Cysteine--tRNA ligase from Rickettsia massiliae (strain Mtu5).